A 433-amino-acid chain; its full sequence is L-2-hydroxyglutarate dehydrogenase, mitochondrial (433 aa).

Belongs to the L2HGDH family. FAD is required as a cofactor.

Its subcellular location is the mitochondrion. It carries out the reaction (S)-2-hydroxyglutarate + A = 2-oxoglutarate + AH2. The chain is L-2-hydroxyglutarate dehydrogenase, mitochondrial from Caenorhabditis elegans.